A 435-amino-acid polypeptide reads, in one-letter code: 3-phosphoshikimate 1-carboxyvinyltransferase (435 aa).

3-phosphoshikimate contacts are provided by Lys-25, Ser-26, and Arg-30. A phosphoenolpyruvate-binding site is contributed by Lys-25. Residues Gly-99 and Arg-130 each contribute to the phosphoenolpyruvate site. 3-phosphoshikimate contacts are provided by Ser-176, Ser-177, Gln-178, Ser-204, Asp-319, Asn-342, and Lys-346. Gln-178 contacts phosphoenolpyruvate. Residue Asp-319 is the Proton acceptor of the active site. 3 residues coordinate phosphoenolpyruvate: Arg-350, Arg-394, and Lys-419.

The protein belongs to the EPSP synthase family. As to quaternary structure, monomer.

The protein localises to the cytoplasm. The enzyme catalyses 3-phosphoshikimate + phosphoenolpyruvate = 5-O-(1-carboxyvinyl)-3-phosphoshikimate + phosphate. It functions in the pathway metabolic intermediate biosynthesis; chorismate biosynthesis; chorismate from D-erythrose 4-phosphate and phosphoenolpyruvate: step 6/7. Functionally, catalyzes the transfer of the enolpyruvyl moiety of phosphoenolpyruvate (PEP) to the 5-hydroxyl of shikimate-3-phosphate (S3P) to produce enolpyruvyl shikimate-3-phosphate and inorganic phosphate. This chain is 3-phosphoshikimate 1-carboxyvinyltransferase, found in Haemophilus ducreyi (strain 35000HP / ATCC 700724).